Here is a 217-residue protein sequence, read N- to C-terminus: Thiamine-phosphate synthase (217 aa).

Residues 39-43 (QLRRK) and asparagine 71 contribute to the 4-amino-2-methyl-5-(diphosphooxymethyl)pyrimidine site. Residues aspartate 72 and aspartate 91 each contribute to the Mg(2+) site. Serine 110 lines the 4-amino-2-methyl-5-(diphosphooxymethyl)pyrimidine pocket. 137-139 (SPT) is a 2-[(2R,5Z)-2-carboxy-4-methylthiazol-5(2H)-ylidene]ethyl phosphate binding site. Residue lysine 140 coordinates 4-amino-2-methyl-5-(diphosphooxymethyl)pyrimidine. 2-[(2R,5Z)-2-carboxy-4-methylthiazol-5(2H)-ylidene]ethyl phosphate is bound by residues glycine 173 and 193 to 194 (IS).

It belongs to the thiamine-phosphate synthase family. It depends on Mg(2+) as a cofactor.

It catalyses the reaction 2-[(2R,5Z)-2-carboxy-4-methylthiazol-5(2H)-ylidene]ethyl phosphate + 4-amino-2-methyl-5-(diphosphooxymethyl)pyrimidine + 2 H(+) = thiamine phosphate + CO2 + diphosphate. The catalysed reaction is 2-(2-carboxy-4-methylthiazol-5-yl)ethyl phosphate + 4-amino-2-methyl-5-(diphosphooxymethyl)pyrimidine + 2 H(+) = thiamine phosphate + CO2 + diphosphate. It carries out the reaction 4-methyl-5-(2-phosphooxyethyl)-thiazole + 4-amino-2-methyl-5-(diphosphooxymethyl)pyrimidine + H(+) = thiamine phosphate + diphosphate. Its pathway is cofactor biosynthesis; thiamine diphosphate biosynthesis; thiamine phosphate from 4-amino-2-methyl-5-diphosphomethylpyrimidine and 4-methyl-5-(2-phosphoethyl)-thiazole: step 1/1. Its function is as follows. Condenses 4-methyl-5-(beta-hydroxyethyl)thiazole monophosphate (THZ-P) and 2-methyl-4-amino-5-hydroxymethyl pyrimidine pyrophosphate (HMP-PP) to form thiamine monophosphate (TMP). This Bordetella parapertussis (strain 12822 / ATCC BAA-587 / NCTC 13253) protein is Thiamine-phosphate synthase.